We begin with the raw amino-acid sequence, 835 residues long: Neuroligin-2 (835 aa).

The first 14 residues, 1–14 (MWLLALCLVGLAGA), serve as a signal peptide directing secretion. Over 15 to 677 (QRGGGGPGGG…DSRDYSTELS (663 aa)) the chain is Extracellular. 2 N-linked (GlcNAc...) asparagine glycosylation sites follow: Asn98 and Asn136. Intrachain disulfides connect Cys106-Cys141, Cys317-Cys328, and Cys487-Cys521. Asn522 carries N-linked (GlcNAc...) asparagine glycosylation. Positions 623–668 (PPYATRWPPRPPAGAPGTRRPPPPATLPPEPEPEPGPRAYDRFPGD) are disordered. A compositionally biased stretch (pro residues) spans 630–658 (PPRPPAGAPGTRRPPPPATLPPEPEPEPG). A helical membrane pass occupies residues 678 to 698 (VTVAVGASLLFLNILAFAALY). The segment at 678–698 (VTVAVGASLLFLNILAFAALY) is required for interaction with LHFPL4. At 699–835 (YKRDRRQELR…LPHPHSTTRV (137 aa)) the chain is on the cytoplasmic side. Residues Ser713 and Ser718 each carry the phosphoserine modification. Residues 790–835 (LLPSGLGPPPPPPPPSLHPFGPFPPPPPTATSHNNTLPHPHSTTRV) form a disordered region. Residues 795–818 (LGPPPPPPPPSLHPFGPFPPPPPT) are compositionally biased toward pro residues. Over residues 823-835 (NNTLPHPHSTTRV) the composition is skewed to polar residues.

It belongs to the type-B carboxylesterase/lipase family. As to quaternary structure, interacts with neurexins NRXN1, NRXN2 and NRXN3. Interaction with neurexins is mediated by heparan sulfate glycan modification on neurexin. Interacts (via its C-terminus) with DLG4/PSD-95 (via PDZ domain 3). Interacts with PATJ. Interacts with GPHN. Interacts with MDGA1 and MDGA2. Found in a complex with MAGI2 and IGSF9B, where it interacts with MAGI2 (via WW 1, WW 2 and PDZ 2 domains). Identified in a complex of 720 kDa composed of LHFPL4, NLGN2, GABRA1, GABRB2, GABRG2 and GABRB3. Interacts with LHFPL4; leading to mutual regulation of the protein level and synaptic clustering. Interacts with NLGN2. In terms of tissue distribution, expressed in the blood vessel walls. Detected in colon, brain and pancreas islets of Langerhans (at protein level). Detected in brain, and at lower levels in pancreas islet beta cells.

It is found in the cell membrane. The protein resides in the postsynaptic cell membrane. Its subcellular location is the presynaptic cell membrane. Its function is as follows. Transmembrane scaffolding protein involved in cell-cell interactions via its interactions with neurexin family members. Mediates cell-cell interactions both in neurons and in other types of cells, such as Langerhans beta cells. Plays a role in synapse function and synaptic signal transmission, especially via gamma-aminobutyric acid receptors (GABA(A) receptors). Functions by recruiting and clustering synaptic proteins. Promotes clustering of postsynaptic GABRG2 and GPHN. Promotes clustering of postsynaptic LHFPL4. Modulates signaling by inhibitory synapses, and thereby plays a role in controlling the ratio of signaling by excitatory and inhibitory synapses and information processing. Required for normal signal amplitude from inhibitory synapses, but is not essential for normal signal frequency. May promote the initial formation of synapses, but is not essential for this. In vitro, triggers the de novo formation of presynaptic structures. Mediates cell-cell interactions between Langerhans beta cells and modulates insulin secretion. The chain is Neuroligin-2 (NLGN2) from Homo sapiens (Human).